Here is a 605-residue protein sequence, read N- to C-terminus: Beta-hexosaminidase ARB_07893 (605 aa).

The N-terminal stretch at 1–18 (MLWIWVPGILGLFGRVEA) is a signal peptide. Asn-30 is a glycosylation site (N-linked (GlcNAc...) asparagine). The active-site Nucleophile is Glu-293. N-linked (GlcNAc...) asparagine glycosylation is present at Asn-342. Glu-374 serves as the catalytic Proton donor. Asn-449 carries an N-linked (GlcNAc...) asparagine glycan.

This sequence belongs to the glycosyl hydrolase 20 family.

The protein resides in the secreted. The catalysed reaction is Hydrolysis of terminal non-reducing N-acetyl-D-hexosamine residues in N-acetyl-beta-D-hexosaminides.. Beta-hexosaminidase that shows a broad substrate specificity. The protein is Beta-hexosaminidase ARB_07893 of Arthroderma benhamiae (strain ATCC MYA-4681 / CBS 112371) (Trichophyton mentagrophytes).